The chain runs to 383 residues: Chaperone protein DnaJ (383 aa).

The J domain maps to 5–70 (DYYELLGVSR…QKRAAYDRFG (66 aa)). Residues 140–219 (GTKTEIRVPT…CSGAGTVPRE (80 aa)) form a CR-type zinc finger. 8 residues coordinate Zn(2+): Cys153, Cys156, Cys171, Cys174, Cys193, Cys196, Cys207, and Cys210. 4 CXXCXGXG motif repeats span residues 153 to 160 (CDACSGTG), 171 to 178 (CPTCGGAG), 193 to 200 (CPTCGGAG), and 207 to 214 (CRVCSGAG).

It belongs to the DnaJ family. In terms of assembly, homodimer. The cofactor is Zn(2+).

It localises to the cytoplasm. Functionally, participates actively in the response to hyperosmotic and heat shock by preventing the aggregation of stress-denatured proteins and by disaggregating proteins, also in an autonomous, DnaK-independent fashion. Unfolded proteins bind initially to DnaJ; upon interaction with the DnaJ-bound protein, DnaK hydrolyzes its bound ATP, resulting in the formation of a stable complex. GrpE releases ADP from DnaK; ATP binding to DnaK triggers the release of the substrate protein, thus completing the reaction cycle. Several rounds of ATP-dependent interactions between DnaJ, DnaK and GrpE are required for fully efficient folding. Also involved, together with DnaK and GrpE, in the DNA replication of plasmids through activation of initiation proteins. The chain is Chaperone protein DnaJ from Acidiphilium cryptum (strain JF-5).